Consider the following 212-residue polypeptide: MTDAARARMLETQLIARGIRDAALLDAMGRVAREAFVPAEFAAEAYADGPLPIGAGQTISQPYIVALMIEALALRPGERVLEVGAGCGYAAAVLATMGARIFAIERHAALAEAARARLAALGLAVRLRVGDGHAGWPEAAPFDAILVSAAGSAVPEALKRQLAQGGRLVIPVGPPGGQTLLRLTRRGPERFESRDFGPVSFVPLLRGVGAAG.

Ser60 is an active-site residue.

The protein belongs to the methyltransferase superfamily. L-isoaspartyl/D-aspartyl protein methyltransferase family.

It localises to the cytoplasm. The catalysed reaction is [protein]-L-isoaspartate + S-adenosyl-L-methionine = [protein]-L-isoaspartate alpha-methyl ester + S-adenosyl-L-homocysteine. Catalyzes the methyl esterification of L-isoaspartyl residues in peptides and proteins that result from spontaneous decomposition of normal L-aspartyl and L-asparaginyl residues. It plays a role in the repair and/or degradation of damaged proteins. The protein is Protein-L-isoaspartate O-methyltransferase of Methylorubrum populi (strain ATCC BAA-705 / NCIMB 13946 / BJ001) (Methylobacterium populi).